Here is a 1184-residue protein sequence, read N- to C-terminus: DNA-directed RNA polymerase subunit beta' (1184 aa).

Zn(2+) is bound by residues cysteine 60, cysteine 62, cysteine 75, and cysteine 78. Mg(2+) contacts are provided by aspartate 449, aspartate 451, and aspartate 453. Zn(2+) is bound by residues cysteine 794, cysteine 867, cysteine 874, and cysteine 877. Residues 1165 to 1184 are disordered; the sequence is NDQQERQDKEKEETEVKASN.

Belongs to the RNA polymerase beta' chain family. The RNAP catalytic core consists of 2 alpha, 1 beta, 1 beta' and 1 omega subunit. When a sigma factor is associated with the core the holoenzyme is formed, which can initiate transcription. The cofactor is Mg(2+). Zn(2+) is required as a cofactor.

The catalysed reaction is RNA(n) + a ribonucleoside 5'-triphosphate = RNA(n+1) + diphosphate. Its function is as follows. DNA-dependent RNA polymerase catalyzes the transcription of DNA into RNA using the four ribonucleoside triphosphates as substrates. In Thermoanaerobacter pseudethanolicus (strain ATCC 33223 / 39E) (Clostridium thermohydrosulfuricum), this protein is DNA-directed RNA polymerase subunit beta'.